The primary structure comprises 535 residues: INSYN2B protein (535 aa).

3 disordered regions span residues 23-85 (LVKQ…SFPR), 215-346 (EARE…RSSS), and 360-387 (KLPS…PRQE). Residues 46-59 (KNPTGVTEVNTQTP) are compositionally biased toward polar residues. Over residues 219-232 (SALSPESSAEESNS) the composition is skewed to low complexity. Composition is skewed to polar residues over residues 258–269 (CSNTNSSASNMP), 307–319 (RTHS…SRSQ), and 361–375 (LPSQ…TGVG). Residues 411 to 448 (DLQGRLQSVEESLHSNQEKIKVLLNVIQDLEKAHALTE) adopt a coiled-coil conformation. A disordered region spans residues 493–528 (LEEAEPTEEAPSPPKSPAEAPVPEKQDLRRKSKKVK).

Belongs to the INSYN2 family.

The sequence is that of INSYN2B protein (Insyn2b) from Mus musculus (Mouse).